Consider the following 521-residue polypeptide: AAA ATPase forming ring-shaped complexes (521 aa).

A coiled-coil region spans residues 4–44; it reads TEDLAALNDRLMAKNHALAEALNRAGKELTKAKSRLAQLAQ. 235–240 is an ATP binding site; the sequence is GNGKTM.

Belongs to the AAA ATPase family. As to quaternary structure, homohexamer. Assembles into a hexameric ring structure.

This is AAA ATPase forming ring-shaped complexes from Bifidobacterium longum subsp. infantis (strain ATCC 15697 / DSM 20088 / JCM 1222 / NCTC 11817 / S12).